A 152-amino-acid chain; its full sequence is Probable spermine N(1)-acetyltransferase (152 aa).

The N-acetyltransferase domain occupies 3 to 152 (INIKAVTDDN…NGEKVMVKEL (150 aa)). Acetyl-CoA contacts are provided by residues 82–84 (FFI), 89–95 (QGKGLGK), and 122–131 (NIHAIRLYQR). Catalysis depends on Tyr-129, which acts as the Proton donor.

It belongs to the acetyltransferase family.

It carries out the reaction an alkane-alpha,omega-diamine + acetyl-CoA = an N-acetylalkane-alpha,omega-diamine + CoA + H(+). It catalyses the reaction spermine + acetyl-CoA = N(1)-acetylspermine + CoA + H(+). Its pathway is amine and polyamine degradation; spermine degradation. Functionally, probably acetylates spermine to N(1)-acetylspermine. This Bacillus subtilis subsp. natto (strain BEST195) protein is Probable spermine N(1)-acetyltransferase.